The sequence spans 61 residues: Keratin-associated protein 8-1 (61 aa).

The segment at 13 to 49 is 11 X 2 AA repeats of G-[YCGS]; it reads GCYWGSYGYPLGYSVGCGYGSTYSPVGYGLGYGYNGC.

This sequence belongs to the KRTAP type 8 family. As to quaternary structure, interacts with hair keratins. As to expression, expression restricted exclusively to the cortical cells of hair follicles.

Functionally, in the hair cortex, hair keratin intermediate filaments are embedded in an interfilamentous matrix, consisting of hair keratin-associated proteins (KRTAP), which are essential for the formation of a rigid and resistant hair shaft through their extensive disulfide bond cross-linking with abundant cysteine residues of hair keratins. The matrix proteins include the high-sulfur and high-glycine-tyrosine keratins. The protein is Keratin-associated protein 8-1 (Krtap8-1) of Mus musculus (Mouse).